Here is a 142-residue protein sequence, read N- to C-terminus: Multiprotein-bridging factor 1b (142 aa).

The tract at residues N49–S75 is disordered. A compositionally biased stretch (polar residues) spans A50–T64. Over residues K65–S75 the composition is skewed to basic and acidic residues. Residues I87–K141 form the HTH cro/C1-type domain. The H-T-H motif DNA-binding region spans Q98–S117.

It belongs to the MBF1 family. As to expression, expressed in leaves, roots, stems, petioles and shoots. Higher expression in flowers and siliques. Detected in leaf veins through development.

It is found in the nucleus. Its subcellular location is the nucleolus. In terms of biological role, transcriptional coactivator that stimulates transcriptional activity by bridging regulatory proteins and TBP, thereby recruiting TBP to promoters occupied by DNA-binding regulators. This chain is Multiprotein-bridging factor 1b (MBF1B), found in Arabidopsis thaliana (Mouse-ear cress).